The following is a 638-amino-acid chain: Growth hormone receptor (638 aa).

The signal sequence occupies residues 1 to 18 (MDLWQLLLTVALAGSSDA). Residues 19 to 264 (FSGSEATPAT…SPFTCEEDFR (246 aa)) lie on the Extracellular side of the membrane. Positions 30–51 (GRASESVQRVHPGLGTNSSGKP) are disordered. An N-linked (GlcNAc...) asparagine glycan is attached at Asn-46. 2 cysteine pairs are disulfide-bonded: Cys-56-Cys-66 and Cys-101-Cys-112. A glycan (N-linked (GlcNAc...) asparagine) is linked at Asn-115. Cys-126 and Cys-140 are oxidised to a cystine. A Fibronectin type-III domain is found at 151–254 (PPIGLNWTLL…EVLYVTLPQM (104 aa)). N-linked (GlcNAc...) asparagine glycans are attached at residues Asn-156, Asn-161, and Asn-200. The WSXWS motif signature appears at 240 to 244 (YGEFS). Residues 260–262 (EED) form a required for ADAM17-mediated proteolysis region. The helical transmembrane segment at 265 to 288 (FPWFLIIIFGIFGLTVMLFVFIFS) threads the bilayer. Over 289–638 (KQQRIKMLIL…STDQLNKILP (350 aa)) the chain is Cytoplasmic. Residues 294–379 (KMLILPPVPV…HQKSLSVLAA (86 aa)) form a required for JAK2 binding region. The short motif at 297–305 (ILPPVPVPK) is the Box 1 motif element. Residues 340-349 (DSWVEFIELD) carry the UbE motif motif. Phosphoserine is present on Ser-341. A Phosphotyrosine modification is found at Tyr-487. A disordered region spans residues 573–592 (TTTAERSGTAEDAPGSEMPV). Tyr-595 carries the phosphotyrosine modification.

It belongs to the type I cytokine receptor family. Type 1 subfamily. As to quaternary structure, on growth hormone (GH) binding, forms homodimers and binds JAK2 via a box 1-containing domain. In terms of processing, the soluble form (GHBP) is produced by phorbol ester-promoted proteolytic cleavage at the cell surface (shedding) by ADAM17/TACE. Shedding is inhibited by growth hormone (GH) binding to the receptor probably due to a conformational change in GHR rendering the receptor inaccessible to ADAM17. Post-translationally, on GH binding, phosphorylated on tyrosine residues in the cytoplasmic domain by JAK2. Ubiquitinated by the ECS(SOCS2) complex following ligand-binding and phosphorylation by JAK2, leading to its degradation by the proteasome. Regulation by the ECS(SOCS2) complex acts as a negative feedback loop of growth hormone receptor signaling. Ubiquitination is not sufficient for GHR internalization.

It localises to the cell membrane. It is found in the secreted. Receptor for pituitary gland growth hormone involved in regulating postnatal body growth. On ligand binding, couples to, and activates the JAK2/STAT5 pathway. In terms of biological role, the soluble form acts as a reservoir of growth hormone in plasma and may be a modulator/inhibitor of GH signaling. This chain is Growth hormone receptor, found in Oryctolagus cuniculus (Rabbit).